The sequence spans 126 residues: Holo-[acyl-carrier-protein] synthase (126 aa).

2 residues coordinate Mg(2+): D9 and E58.

Belongs to the P-Pant transferase superfamily. AcpS family. Mg(2+) is required as a cofactor.

It localises to the cytoplasm. It carries out the reaction apo-[ACP] + CoA = holo-[ACP] + adenosine 3',5'-bisphosphate + H(+). In terms of biological role, transfers the 4'-phosphopantetheine moiety from coenzyme A to a Ser of acyl-carrier-protein. The polypeptide is Holo-[acyl-carrier-protein] synthase (Erwinia tasmaniensis (strain DSM 17950 / CFBP 7177 / CIP 109463 / NCPPB 4357 / Et1/99)).